A 556-amino-acid chain; its full sequence is Formate--tetrahydrofolate ligase (556 aa).

65–72 serves as a coordination point for ATP; sequence TPAGEGKS.

This sequence belongs to the formate--tetrahydrofolate ligase family.

It catalyses the reaction (6S)-5,6,7,8-tetrahydrofolate + formate + ATP = (6R)-10-formyltetrahydrofolate + ADP + phosphate. The protein operates within one-carbon metabolism; tetrahydrofolate interconversion. The sequence is that of Formate--tetrahydrofolate ligase from Streptococcus thermophilus (strain ATCC BAA-491 / LMD-9).